The following is a 185-amino-acid chain: MISTNEFRTGLTVEVDGDPCQVIEFMHVKPGKGSPFVRAKLKNLRTGAIAERTFNAGEKLPRAILERKEMQYLYNDGANYYLMDNETYDQVGLSAGQLGDGVKYLKENMIINVVYHRGQVLGVDLPNTVELTVIETTPGIRGDTASGGSKPAVLETGVVLQVPLFVEEGDVIQVDTRSGAYIKRA.

It belongs to the elongation factor P family.

Its subcellular location is the cytoplasm. The protein operates within protein biosynthesis; polypeptide chain elongation. Its function is as follows. Involved in peptide bond synthesis. Stimulates efficient translation and peptide-bond synthesis on native or reconstituted 70S ribosomes in vitro. Probably functions indirectly by altering the affinity of the ribosome for aminoacyl-tRNA, thus increasing their reactivity as acceptors for peptidyl transferase. The protein is Elongation factor P of Desulforudis audaxviator (strain MP104C).